Here is a 27-residue protein sequence, read N- to C-terminus: Ranatuerin-2Cb (27 aa).

C20 and C25 are joined by a disulfide.

Expressed by the skin glands.

The protein localises to the secreted. Antibacterial activity against Gram-positive bacterium S.aureus (MIC=40 uM) and Gram-negative bacterium E.coli (MIC=2 uM). Has activity against C.albicans (MIC=46 uM). In Lithobates clamitans (Green frog), this protein is Ranatuerin-2Cb.